Reading from the N-terminus, the 271-residue chain is Tumor necrosis factor receptor superfamily member 4 (271 aa).

Positions 1 to 19 (MYVWVQQPTAFLLLGLSLG) are cleaved as a signal peptide. Over 20–210 (VTVKLNCVKD…TPTLVAPEGP (191 aa)) the chain is Extracellular. TNFR-Cys repeat units lie at residues 25 to 60 (NCVK…TVCH) and 61 to 102 (PCEP…DTVC). 8 disulfides stabilise this stretch: Cys26–Cys37, Cys38–Cys51, Cys41–Cys59, Cys62–Cys76, Cys79–Cys94, Cys82–Cys102, Cys104–Cys122, and Cys125–Cys138. The TNFR-Cys 3; truncated repeat unit spans residues 103 to 123 (QCRPGTQPRQDSSHKLGVDCV). The TNFR-Cys 4 repeat unit spans residues 124-164 (PCPPGHFSPGSNQACKPWTNCTLSGKQIRHPASNSLDTVCE). The N-linked (GlcNAc...) asparagine glycan is linked to Asn143. Cys144 and Cys163 form a disulfide bridge. Residues 211-235 (AFAVILGLGLGLLAPLTVLLALYLL) traverse the membrane as a helical segment. Topologically, residues 236-271 (RKAWRSPNTPKPCWGNSFRTPIQEEQTDTHFTLAKI) are cytoplasmic.

As to quaternary structure, interacts with TRAF2, TRAF3 and TRAF5. As to expression, activated T-cells.

The protein localises to the membrane. Its function is as follows. Receptor for TNFSF4/OX40L/GP34. Is a costimulatory molecule implicated in long-term T-cell immunity. This chain is Tumor necrosis factor receptor superfamily member 4 (Tnfrsf4), found in Rattus norvegicus (Rat).